The sequence spans 66 residues: Large ribosomal subunit protein bL35 (66 aa).

Positions 1-24 are enriched in basic residues; it reads MPKQKTHRGAAKRFKKTGSGKLKR. The segment at 1-26 is disordered; the sequence is MPKQKTHRGAAKRFKKTGSGKLKRDH.

It belongs to the bacterial ribosomal protein bL35 family.

This chain is Large ribosomal subunit protein bL35, found in Bacillus cytotoxicus (strain DSM 22905 / CIP 110041 / 391-98 / NVH 391-98).